We begin with the raw amino-acid sequence, 1212 residues long: Nucleolar protein 6 (1212 aa).

Disordered regions lie at residues 1–72 (MGKI…PVSI) and 1156–1212 (KREQ…KSLS). A compositionally biased stretch (basic residues) spans 1197–1212 (LKRKSLIKSRPLKSLS).

This sequence belongs to the NRAP family. As to quaternary structure, part of the small subunit (SSU) processome, composed of more than 70 proteins and the RNA chaperone small nucleolar RNA (snoRNA) U3.

The protein resides in the nucleus. Its subcellular location is the nucleolus. It localises to the chromosome. In terms of biological role, part of the small subunit (SSU) processome, first precursor of the small eukaryotic ribosomal subunit. During the assembly of the SSU processome in the nucleolus, many ribosome biogenesis factors, an RNA chaperone and ribosomal proteins associate with the nascent pre-rRNA and work in concert to generate RNA folding, modifications, rearrangements and cleavage as well as targeted degradation of pre-ribosomal RNA by the RNA exosome. This chain is Nucleolar protein 6, found in Drosophila persimilis (Fruit fly).